The primary structure comprises 107 residues: MISGDTILFALMVVTCVNWARYFTALRTLIYIMREAHPLLYQQVDGGGFFTTHGNMTKQVRLFSYIKSKEYHHHHDEVFTSKCDRVRQLFILSSALLGVTLLSSFIV.

2 helical membrane passes run 6–23 (TILF…ARYF) and 89–106 (LFIL…SSFI).

It belongs to the universal stress protein B family.

It is found in the cell inner membrane. The polypeptide is Universal stress protein B homolog (Vibrio atlanticus (strain LGP32) (Vibrio splendidus (strain Mel32))).